The chain runs to 340 residues: N-acetyl-gamma-glutamyl-phosphate reductase (340 aa).

C147 is a catalytic residue.

Belongs to the NAGSA dehydrogenase family. Type 1 subfamily.

Its subcellular location is the cytoplasm. It catalyses the reaction N-acetyl-L-glutamate 5-semialdehyde + phosphate + NADP(+) = N-acetyl-L-glutamyl 5-phosphate + NADPH + H(+). It functions in the pathway amino-acid biosynthesis; L-arginine biosynthesis; N(2)-acetyl-L-ornithine from L-glutamate: step 3/4. In terms of biological role, catalyzes the NADPH-dependent reduction of N-acetyl-5-glutamyl phosphate to yield N-acetyl-L-glutamate 5-semialdehyde. The protein is N-acetyl-gamma-glutamyl-phosphate reductase of Lactococcus lactis subsp. lactis (strain IL1403) (Streptococcus lactis).